A 249-amino-acid chain; its full sequence is Coproheme decarboxylase (249 aa).

Fe-coproporphyrin III is bound by residues Arg-131, 145–149 (YPMDK), His-172, Gln-185, and Ser-223. Tyr-145 is an active-site residue.

It belongs to the ChdC family. Type 1 subfamily. The cofactor is Fe-coproporphyrin III.

The catalysed reaction is Fe-coproporphyrin III + 2 H2O2 + 2 H(+) = heme b + 2 CO2 + 4 H2O. The enzyme catalyses Fe-coproporphyrin III + H2O2 + H(+) = harderoheme III + CO2 + 2 H2O. It catalyses the reaction harderoheme III + H2O2 + H(+) = heme b + CO2 + 2 H2O. Its pathway is porphyrin-containing compound metabolism; protoheme biosynthesis. Involved in coproporphyrin-dependent heme b biosynthesis. Catalyzes the decarboxylation of Fe-coproporphyrin III (coproheme) to heme b (protoheme IX), the last step of the pathway. The reaction occurs in a stepwise manner with a three-propionate intermediate. In Shouchella clausii (strain KSM-K16) (Alkalihalobacillus clausii), this protein is Coproheme decarboxylase.